Here is a 172-residue protein sequence, read N- to C-terminus: MEIEATTVQKRRSLPTIAMHKQSRTLTKSKPKIRIIHIFAPEIIKTDVANFREIVQNLTGKQDHHHHDLPHQKGLKRNPRSRRSHDHHEVHDMNKSHGFCINSDEEEEGMVSMTWNGNGDESSGGFLNGLGDLDGFIQELGEFPYLPFTIDPAVASSSHLHGNVFAEPHHYA.

The VQ signature appears at 51–60 (FREIVQNLTG). The interval 60-97 (GKQDHHHHDLPHQKGLKRNPRSRRSHDHHEVHDMNKSH) is disordered. Residues 61–71 (KQDHHHHDLPH) show a composition bias toward basic and acidic residues. The span at 72 to 85 (QKGLKRNPRSRRSH) shows a compositional bias: basic residues. The span at 86-95 (DHHEVHDMNK) shows a compositional bias: basic and acidic residues.

It is found in the nucleus. Its function is as follows. May function as positive regulator of plant growth. The chain is VQ motif-containing protein 17 from Arabidopsis thaliana (Mouse-ear cress).